The chain runs to 136 residues: NADPH-dependent 7-cyano-7-deazaguanine reductase (136 aa).

Cys50 serves as the catalytic Thioimide intermediate. The active-site Proton donor is Asp57. Substrate contacts are provided by residues 72 to 74 and 91 to 92; these read YEL and HE.

This sequence belongs to the GTP cyclohydrolase I family. QueF type 1 subfamily.

The protein localises to the cytoplasm. The enzyme catalyses 7-aminomethyl-7-carbaguanine + 2 NADP(+) = 7-cyano-7-deazaguanine + 2 NADPH + 3 H(+). It functions in the pathway tRNA modification; tRNA-queuosine biosynthesis. In terms of biological role, catalyzes the NADPH-dependent reduction of 7-cyano-7-deazaguanine (preQ0) to 7-aminomethyl-7-deazaguanine (preQ1). In Prochlorococcus marinus (strain MIT 9312), this protein is NADPH-dependent 7-cyano-7-deazaguanine reductase.